Here is a 379-residue protein sequence, read N- to C-terminus: Anhydro-N-acetylmuramic acid kinase (379 aa).

9-16 (GTSVDGID) provides a ligand contact to ATP.

Belongs to the anhydro-N-acetylmuramic acid kinase family.

It carries out the reaction 1,6-anhydro-N-acetyl-beta-muramate + ATP + H2O = N-acetyl-D-muramate 6-phosphate + ADP + H(+). Its pathway is amino-sugar metabolism; 1,6-anhydro-N-acetylmuramate degradation. The protein operates within cell wall biogenesis; peptidoglycan recycling. In terms of biological role, catalyzes the specific phosphorylation of 1,6-anhydro-N-acetylmuramic acid (anhMurNAc) with the simultaneous cleavage of the 1,6-anhydro ring, generating MurNAc-6-P. Is required for the utilization of anhMurNAc either imported from the medium or derived from its own cell wall murein, and thus plays a role in cell wall recycling. The sequence is that of Anhydro-N-acetylmuramic acid kinase from Picosynechococcus sp. (strain ATCC 27264 / PCC 7002 / PR-6) (Agmenellum quadruplicatum).